Consider the following 430-residue polypeptide: UDP-N-acetylmuramoylalanine--D-glutamate ligase (430 aa).

109 to 115 contributes to the ATP binding site; it reads GTDGKST.

This sequence belongs to the MurCDEF family.

The protein resides in the cytoplasm. The catalysed reaction is UDP-N-acetyl-alpha-D-muramoyl-L-alanine + D-glutamate + ATP = UDP-N-acetyl-alpha-D-muramoyl-L-alanyl-D-glutamate + ADP + phosphate + H(+). It participates in cell wall biogenesis; peptidoglycan biosynthesis. Its function is as follows. Cell wall formation. Catalyzes the addition of glutamate to the nucleotide precursor UDP-N-acetylmuramoyl-L-alanine (UMA). This Thermotoga petrophila (strain ATCC BAA-488 / DSM 13995 / JCM 10881 / RKU-1) protein is UDP-N-acetylmuramoylalanine--D-glutamate ligase.